A 377-amino-acid chain; its full sequence is Sterol 24-C-methyltransferase erg6 (377 aa).

This sequence belongs to the class I-like SAM-binding methyltransferase superfamily. Erg6/SMT family.

It localises to the microsome. It is found in the mitochondrion. It carries out the reaction lanosterol + S-adenosyl-L-methionine = eburicol + S-adenosyl-L-homocysteine + H(+). It participates in steroid metabolism; ergosterol biosynthesis. Its activity is regulated as follows. Specific and total activity is decreased in presence of alpha-bisabolol. Functionally, sterol 24-C-methyltransferase; part of the third module of ergosterol biosynthesis pathway that includes the late steps of the pathway. Methylates lanosterol at C-24 to produce eburicol. The third module or late pathway involves the ergosterol synthesis itself through consecutive reactions that mainly occur in the endoplasmic reticulum (ER) membrane. Firstly, the squalene synthase erg9 catalyzes the condensation of 2 farnesyl pyrophosphate moieties to form squalene, which is the precursor of all steroids. Squalene synthase is crucial for balancing the incorporation of farnesyl diphosphate (FPP) into sterol and nonsterol isoprene synthesis. Secondly, squalene is converted into lanosterol by the consecutive action of the squalene epoxidase erg1 and the lanosterol synthase erg7. Then, the delta(24)-sterol C-methyltransferase erg6 methylates lanosterol at C-24 to produce eburicol. Eburicol is the substrate of the sterol 14-alpha demethylase encoded by cyp51A and cyp51B, to yield 4,4,24-trimethyl ergosta-8,14,24(28)-trienol. The C-14 reductase erg24 then reduces the C14=C15 double bond which leads to 4,4-dimethylfecosterol. A sequence of further demethylations at C-4, involving the C-4 demethylation complex containing the C-4 methylsterol oxidases erg25A or erg25B, the sterol-4-alpha-carboxylate 3-dehydrogenase erg26 and the 3-keto-steroid reductase erg27, leads to the production of fecosterol via 4-methylfecosterol. The C-8 sterol isomerase erg2 then catalyzes the reaction which results in unsaturation at C-7 in the B ring of sterols and thus converts fecosterol to episterol. The sterol-C5-desaturase erg3B then catalyzes the introduction of a C-5 double bond in the B ring to produce 5-dehydroepisterol. The 2 other sterol-C5-desaturases, erg3A and erg3C, seem to be less important in ergosterol biosynthesis. The C-22 sterol desaturase erg5 further converts 5-dehydroepisterol into ergosta-5,7,22,24(28)-tetraen-3beta-ol by forming the C-22(23) double bond in the sterol side chain. Finally, ergosta-5,7,22,24(28)-tetraen-3beta-ol is substrate of the C-24(28) sterol reductases erg4A and erg4B to produce ergosterol. Possible alternative sterol biosynthetic pathways might exist from fecosterol to ergosterol, depending on the activities of the erg3 isoforms. The protein is Sterol 24-C-methyltransferase erg6 of Aspergillus fumigatus (strain ATCC MYA-4609 / CBS 101355 / FGSC A1100 / Af293) (Neosartorya fumigata).